Here is a 520-residue protein sequence, read N- to C-terminus: AarF domain-containing protein kinase 1 (520 aa).

The Protein kinase domain occupies 148 to 455 (EFEKTPLGAA…GTHSSSSAFF (308 aa)). ATP-binding positions include 154–162 (LGAASLAQV) and lysine 176. Aspartate 308 (proton acceptor) is an active-site residue.

It belongs to the protein kinase superfamily. ADCK protein kinase family.

It is found in the mitochondrion. Its function is as follows. Appears to be essential for maintaining mitochondrial cristae formation and mitochondrial function by acting via YME1L1 in a kinase-independent manner to regulate essential mitochondrial structural proteins OPA1 and IMMT. The action of this enzyme is not yet clear. It is not known if it has protein kinase activity and what type of substrate it would phosphorylate (Ser, Thr or Tyr). The chain is AarF domain-containing protein kinase 1 (adck1) from Xenopus laevis (African clawed frog).